The primary structure comprises 569 residues: AsmA family protein YicH (569 aa).

The Cytoplasmic segment spans residues 1 to 6; it reads MKFIGK. The helical transmembrane segment at 7–27 threads the bilayer; it reads LLLYILIALLVAIAGLYFLLQ. Residues 28–569 lie on the Periplasmic side of the membrane; that stretch reads TRWGAEHISA…GEVTSTEPVR (542 aa).

It belongs to the AsmA family.

Its subcellular location is the cell inner membrane. This Escherichia coli (strain K12) protein is AsmA family protein YicH (yicH).